Reading from the N-terminus, the 264-residue chain is Small ribosomal subunit protein eS1 (264 aa).

Residue lysine 34 is modified to N6-acetyllysine; alternate. A Glycyl lysine isopeptide (Lys-Gly) (interchain with G-Cter in SUMO2); alternate cross-link involves residue lysine 34. Lysine 56 carries the N6-acetyllysine modification. Position 155 is an ADP-ribosyltyrosine (tyrosine 155). The disordered stretch occupies residues glycine 233–valine 264. Serine 237 is subject to Phosphoserine. The span at alanine 242 to glycine 255 shows a compositional bias: basic and acidic residues. At lysine 249 the chain carries N6-acetyllysine; alternate. Lysine 249 is covalently cross-linked (Glycyl lysine isopeptide (Lys-Gly) (interchain with G-Cter in SUMO2); alternate). Tyrosine 256 carries the post-translational modification Phosphotyrosine. At serine 263 the chain carries Phosphoserine.

This sequence belongs to the eukaryotic ribosomal protein eS1 family. As to quaternary structure, component of the small ribosomal subunit. Mature ribosomes consist of a small (40S) and a large (60S) subunit. The 40S subunit contains about 33 different proteins and 1 molecule of RNA (18S). The 60S subunit contains about 49 different proteins and 3 molecules of RNA (28S, 5.8S and 5S). Identified in a IGF2BP1-dependent mRNP granule complex containing untranslated mRNAs. Binds with high affinity to IPO4. Interacts with DDIT3. Part of the small subunit (SSU) processome, composed of more than 70 proteins and the RNA chaperone small nucleolar RNA (snoRNA) U3. In terms of processing, ADP-ribosylated at Tyr-155 by PARP1 in presence of HPF1.

The protein localises to the cytoplasm. Its subcellular location is the nucleus. The protein resides in the nucleolus. Functionally, component of the small ribosomal subunit. The ribosome is a large ribonucleoprotein complex responsible for the synthesis of proteins in the cell. Part of the small subunit (SSU) processome, first precursor of the small eukaryotic ribosomal subunit. During the assembly of the SSU processome in the nucleolus, many ribosome biogenesis factors, an RNA chaperone and ribosomal proteins associate with the nascent pre-rRNA and work in concert to generate RNA folding, modifications, rearrangements and cleavage as well as targeted degradation of pre-ribosomal RNA by the RNA exosome. May play a role during erythropoiesis through regulation of transcription factor DDIT3. This is Small ribosomal subunit protein eS1 (Rps3a) from Mus musculus (Mouse).